The sequence spans 512 residues: Krueppel-like factor 11 (512 aa).

The interval 109-128 (PQSPDLVEPSTRTPVSPQVT) is disordered. Positions 118-128 (STRTPVSPQVT) are enriched in polar residues. S124 carries the post-translational modification Phosphoserine. 3 C2H2-type zinc fingers span residues 394-418 (YVCSFPGCRKTYFKSSHLKAHLRTH), 424-448 (FNCSWDGCDKKFARSDELSRHRRTH), and 454-476 (FVCPVCDRRFMRSDHLTKHARRH).

It belongs to the Sp1 C2H2-type zinc-finger protein family. Interacts with SIN3A. Ubiquitous. Higher expression in erythroid cells.

It is found in the nucleus. Transcription factor. Activates the epsilon- and gamma-globin gene promoters and, to a much lower degree, the beta-globin gene and represses promoters containing SP1-like binding inhibiting cell growth. Represses transcription of SMAD7 which enhances TGF-beta signaling. Induces apoptosis. In Homo sapiens (Human), this protein is Krueppel-like factor 11 (KLF11).